The sequence spans 113 residues: Hydrogenase maturation factor HypA (113 aa).

His-2 contributes to the Ni(2+) binding site. Residues Cys-73, Cys-76, Cys-89, and Cys-92 each contribute to the Zn(2+) site.

Belongs to the HypA/HybF family.

In terms of biological role, involved in the maturation of [NiFe] hydrogenases. Required for nickel insertion into the metal center of the hydrogenase. The sequence is that of Hydrogenase maturation factor HypA from Azotobacter chroococcum mcd 1.